The sequence spans 370 residues: (5-formylfuran-3-yl)methyl phosphate transaminase (370 aa).

Lysine 222 is subject to N6-(pyridoxal phosphate)lysine.

The protein belongs to the class-I pyridoxal-phosphate-dependent aminotransferase family. In terms of assembly, homodimer. It depends on pyridoxal 5'-phosphate as a cofactor.

The protein localises to the cytoplasm. The catalysed reaction is 4-(hydroxymethyl)-2-furancarboxaldehyde phosphate + L-alanine = [5-(aminomethyl)-3-furyl]methyl phosphate + pyruvate. It participates in cofactor biosynthesis; methanofuran biosynthesis. In terms of biological role, catalyzes the transamination reaction between 4-(hydroxymethyl)-2-furancarboxaldehyde phosphate (4-HFC-P) and alanine to produce pyruvate and 5-(aminomethyl)-3-furanmethanol phosphate (F1-P), the precursor for the furan moiety in methanofuran. The sequence is that of (5-formylfuran-3-yl)methyl phosphate transaminase from Methanocaldococcus jannaschii (strain ATCC 43067 / DSM 2661 / JAL-1 / JCM 10045 / NBRC 100440) (Methanococcus jannaschii).